The chain runs to 432 residues: Adenylosuccinate synthetase (432 aa).

Residues 12-18 (GDEGKGK) and 40-42 (GHT) each bind GTP. Catalysis depends on Asp13, which acts as the Proton acceptor. The Mg(2+) site is built by Asp13 and Gly40. IMP contacts are provided by residues 13–16 (DEGK), 38–41 (NAGH), Thr132, Arg146, Gln226, Thr241, and Arg305. The active-site Proton donor is the His41. 301 to 307 (VVTGRKR) contacts substrate. GTP is bound by residues Arg307, 333–335 (KLD), and 415–417 (STS).

The protein belongs to the adenylosuccinate synthetase family. Homodimer. Requires Mg(2+) as cofactor.

It localises to the cytoplasm. It catalyses the reaction IMP + L-aspartate + GTP = N(6)-(1,2-dicarboxyethyl)-AMP + GDP + phosphate + 2 H(+). Its pathway is purine metabolism; AMP biosynthesis via de novo pathway; AMP from IMP: step 1/2. In terms of biological role, plays an important role in the de novo pathway of purine nucleotide biosynthesis. Catalyzes the first committed step in the biosynthesis of AMP from IMP. The chain is Adenylosuccinate synthetase from Rhizobium leguminosarum bv. trifolii (strain WSM2304).